A 339-amino-acid chain; its full sequence is Serine/threonine-protein kinase SRK2J (339 aa).

The Protein kinase domain maps to 4–260 (YEMVKDLGFG…LKEIKSHAWF (257 aa)). Residues 10–18 (LGFGNFGLA) and lysine 33 contribute to the ATP site. Aspartate 123 (proton acceptor) is an active-site residue. The segment at 308-339 (SRPVESLGSDKKDDDEEEYLDANDEEWYDDYA) is disordered. Residues 320–339 (DDDEEEYLDANDEEWYDDYA) show a composition bias toward acidic residues.

The protein belongs to the protein kinase superfamily. Ser/Thr protein kinase family. In terms of tissue distribution, expressed in seedlings.

It carries out the reaction L-seryl-[protein] + ATP = O-phospho-L-seryl-[protein] + ADP + H(+). The enzyme catalyses L-threonyl-[protein] + ATP = O-phospho-L-threonyl-[protein] + ADP + H(+). The protein is Serine/threonine-protein kinase SRK2J (SRK2J) of Arabidopsis thaliana (Mouse-ear cress).